The chain runs to 260 residues: Putative cysteine-rich repeat secretory protein 23 (260 aa).

A signal peptide spans 1-31 (MSSSFVYKSLFLVPILAVVAMQLSFVQSVLS). Gnk2-homologous domains lie at 38 to 136 (YLHH…NISY) and 142 to 254 (LPEQ…LYLF).

This sequence belongs to the cysteine-rich repeat secretory protein family.

The protein localises to the secreted. In Arabidopsis thaliana (Mouse-ear cress), this protein is Putative cysteine-rich repeat secretory protein 23 (CRRSP23).